A 264-amino-acid polypeptide reads, in one-letter code: 3-methyl-2-oxobutanoate hydroxymethyltransferase (264 aa).

D45 and D84 together coordinate Mg(2+). Residues 45–46 (DS), D84, and K112 each bind 3-methyl-2-oxobutanoate. E114 contributes to the Mg(2+) binding site. E181 acts as the Proton acceptor in catalysis.

This sequence belongs to the PanB family. In terms of assembly, homodecamer; pentamer of dimers. The cofactor is Mg(2+).

Its subcellular location is the cytoplasm. It catalyses the reaction 3-methyl-2-oxobutanoate + (6R)-5,10-methylene-5,6,7,8-tetrahydrofolate + H2O = 2-dehydropantoate + (6S)-5,6,7,8-tetrahydrofolate. It participates in cofactor biosynthesis; (R)-pantothenate biosynthesis; (R)-pantoate from 3-methyl-2-oxobutanoate: step 1/2. Its function is as follows. Catalyzes the reversible reaction in which hydroxymethyl group from 5,10-methylenetetrahydrofolate is transferred onto alpha-ketoisovalerate to form ketopantoate. The chain is 3-methyl-2-oxobutanoate hydroxymethyltransferase from Escherichia coli (strain 55989 / EAEC).